The chain runs to 2004 residues: Alpha-2-macroglobulin homolog (2004 aa).

The first 27 residues, 1–27 (MLCCLVFKGLLSMDLLRFLLISPFALI), serve as a signal peptide directing secretion.

This sequence belongs to the protease inhibitor I39 (alpha-2-macroglobulin) family. Bacterial alpha-2-macroglobulin subfamily.

The sequence is that of Alpha-2-macroglobulin homolog from Yersinia pestis.